A 1101-amino-acid chain; its full sequence is Rho GTPase-activating protein 30 (1101 aa).

A Rho-GAP domain is found at 20–215; that stretch reads CDLQEHLQHS…FILTHVDQLF (196 aa). 3 disordered regions span residues 224 to 243, 300 to 400, and 451 to 529; these read EVES…SPED, HETK…RAGG, and ALQH…AEDG. Residues 308–318 show a composition bias toward basic and acidic residues; the sequence is RGAEDREDKSN. Residues 360–376 are compositionally biased toward acidic residues; it reads LENDSIEAAEGEQEPEA. Residues 459-472 show a composition bias toward pro residues; that stretch reads ASGPGPGPGLGPGP. Positions 508–520 are enriched in low complexity; the sequence is DSFSFLEDSSSSE. Phosphoserine is present on S576. Disordered stretches follow at residues 621–906 and 965–991; these read GPKP…QPSP and CPRP…SWRN. Composition is skewed to basic and acidic residues over residues 658 to 694, 701 to 735, 759 to 770, and 779 to 822; these read GEDK…DRGE, TKVR…KGVE, EEAQVEAGRDLE, and AEEK…DSRS. The span at 976-991 shows a compositional bias: low complexity; sequence GERAWGSRASRSSWRN. S996 is subject to Phosphoserine. A disordered region spans residues 1050-1101; that stretch reads LELPSEGAEGSGSRSRLSLPPREPQVPDPLLSSQRRSYAFETQANPGKGEGL. Residues 1053 to 1069 are compositionally biased toward low complexity; the sequence is PSEGAEGSGSRSRLSLP. The span at 1080-1094 shows a compositional bias: polar residues; that stretch reads LSSQRRSYAFETQAN.

Interacts with RHOU in a GTP-independent manner.

Its subcellular location is the cytoplasmic vesicle. Its function is as follows. GTPase-activating protein (GAP) for RAC1 and RHOA, but not for CDC42. This is Rho GTPase-activating protein 30 (ARHGAP30) from Homo sapiens (Human).